Consider the following 132-residue polypeptide: Small ribosomal subunit protein uS11c (132 aa).

Belongs to the universal ribosomal protein uS11 family. In terms of assembly, part of the 30S ribosomal subunit.

Its subcellular location is the plastid. The protein resides in the chloroplast. The sequence is that of Small ribosomal subunit protein uS11c from Cryptomeria japonica (Japanese cedar).